Reading from the N-terminus, the 231-residue chain is CLAVATA3/ESR (CLE)-related protein 4B-2 (231 aa).

Residues 1–21 form the signal peptide; it reads MATNTMLCLLILSVVLALAFA. Residues 21–83 are required for secretion from the host cytoplasm to the host apoplasm; sequence ATNKKGDEEP…SNQLPNNNWM (63 aa). Asn32 carries N-linked (GlcNAc...) asparagine glycosylation. A disordered region spans residues 116 to 231; the sequence is RKTGMHSQRH…APAGPDPIHH (116 aa). Basic and acidic residues-rich tracts occupy residues 125-137 and 144-221; these read HHEETTLEQEKRV and PIHH…EKRG. An A-1 repeat occupies 127 to 135; the sequence is EETTLEQEK. The interval 127-219 is 5 X approximate repeat A; that stretch reads EETTLEQEKR…HEETTFEQEK (93 aa). The CLE-1 repeat unit spans residues 136–147; that stretch reads RVAGAGPDPIHH. Positions 136 to 231 are 5 X approximate repeat CLE; it reads RVAGAGPDPI…APAGPDPIHH (96 aa). Residues 148-156 form an A-2 repeat; the sequence is EETTLEQEK. Residues 157-168 form a CLE-2 repeat; that stretch reads RAVPAGPDPKHH. Residues 169–177 form an A-3 repeat; that stretch reads EETTLEQEK. Residues 178–189 form a CLE-3 repeat; sequence RAVPAGPDPKHH. The A-4 repeat unit spans residues 190-198; sequence EETTLEQEK. One copy of the CLE-4 repeat lies at 199–210; that stretch reads RAVPAGPDPKHH. An A-5 repeat occupies 211–219; the sequence is EETTFEQEK. The stretch at 220–231 is one CLE-5 repeat; the sequence is RGAPAGPDPIHH.

It belongs to the CLV3/ESR signal peptide family. Highly expressed exclusively within the dorsal esophageal gland cell during syncytium formation in host plants.

The protein localises to the secreted. Its subcellular location is the host cytoplasm. The protein resides in the host extracellular space. It is found in the extracellular space. It localises to the apoplast. In terms of biological role, mimics host plant CLE extracellular signal peptides that regulate cell fate. May play a role in the differentiation or division of feeding cells (syncytia) induced in plant roots during infection. The polypeptide is CLAVATA3/ESR (CLE)-related protein 4B-2 (CLE-4B-2) (Globodera rostochiensis (Golden nematode worm)).